Consider the following 61-residue polypeptide: MLPNLRRIFASFRTEEEERSYSRKAFFHLIGYITCSVLFSWLVRKKVISSPVVSSPIHALS.

Residues 1–20 lie on the Mitochondrial intermembrane side of the membrane; it reads MLPNLRRIFASFRTEEEERS. The helical transmembrane segment at 21–43 threads the bilayer; it reads YSRKAFFHLIGYITCSVLFSWLV. Over 44–61 the chain is Cytoplasmic; that stretch reads RKKVISSPVVSSPIHALS.

It belongs to the EMR1 family. In terms of assembly, interacts with the ER-mitochondria encounter structure (ERMES) complex. Interacts with mdm12. Interacts with mdm34.

The protein resides in the mitochondrion outer membrane. Mediates the formation of endoplasmic reticulum (ER)-mitochondria encounter structure (ERMES) foci, thereby contributing to the formation of ER-mitochondrial contact sites. The sequence is that of ERMES regulator 1 from Schizosaccharomyces pombe (strain 972 / ATCC 24843) (Fission yeast).